The primary structure comprises 319 residues: Annexin A4 (319 aa).

Thr-7 is subject to Phosphothreonine. A Phosphoserine modification is found at Ser-12. Annexin repeat units follow at residues 14–85 (FNAT…GLMT), 86–157 (PTVL…SLSA), 169–241 (ALMK…AIVK), and 245–316 (SKPS…VLCG). Lys-213, Lys-293, and Lys-300 each carry N6-acetyllysine.

This sequence belongs to the annexin family.

Its subcellular location is the zymogen granule membrane. In terms of biological role, calcium/phospholipid-binding protein which promotes membrane fusion and is involved in exocytosis. The sequence is that of Annexin A4 (Anxa4) from Mus musculus (Mouse).